Consider the following 539-residue polypeptide: Chaperonin GroEL (539 aa).

ATP-binding positions include 29–32 (TIGP), 86–90 (DGTTT), glycine 413, 476–478 (NAA), and aspartate 492.

Belongs to the chaperonin (HSP60) family. As to quaternary structure, forms a cylinder of 14 subunits composed of two heptameric rings stacked back-to-back. Interacts with the co-chaperonin GroES.

The protein resides in the cytoplasm. It carries out the reaction ATP + H2O + a folded polypeptide = ADP + phosphate + an unfolded polypeptide.. Its function is as follows. Together with its co-chaperonin GroES, plays an essential role in assisting protein folding. The GroEL-GroES system forms a nano-cage that allows encapsulation of the non-native substrate proteins and provides a physical environment optimized to promote and accelerate protein folding. In Pediococcus pentosaceus (strain ATCC 25745 / CCUG 21536 / LMG 10740 / 183-1w), this protein is Chaperonin GroEL.